The following is a 147-amino-acid chain: Hemoglobin subunit gamma-2 (147 aa).

Residues 3-147 (HFTEEDKATI…VASALSSRYH (145 aa)) enclose the Globin domain. T13 carries the post-translational modification Phosphothreonine. A phosphoserine mark is found at S45, S51, and S53. N6-acetyllysine is present on K60. A heme b-binding site is contributed by H64. The residue at position 83 (K83) is an N6-acetyllysine. H93 is a heme b binding site. S-nitrosocysteine is present on C94. Phosphoserine is present on residues S140, S143, and S144.

This sequence belongs to the globin family. In terms of assembly, heterotetramer of two alpha chains and two gamma chains in fetal hemoglobin (Hb F). Red blood cells.

Gamma chains make up the fetal hemoglobin F, in combination with alpha chains. This is Hemoglobin subunit gamma-2 (HBG2) from Gorilla gorilla gorilla (Western lowland gorilla).